Here is a 63-residue protein sequence, read N- to C-terminus: Large ribosomal subunit protein uL29 (63 aa).

Belongs to the universal ribosomal protein uL29 family.

The polypeptide is Large ribosomal subunit protein uL29 (Listeria innocua serovar 6a (strain ATCC BAA-680 / CLIP 11262)).